The following is a 258-amino-acid chain: Snake venom serine protease 3 (258 aa).

The first 18 residues, 1–18 (MVLIRVLANLLILQLSYA), serve as a signal peptide directing secretion. Residues 19–24 (QKSSEL) constitute a propeptide that is removed on maturation. In terms of domain architecture, Peptidase S1 spans 25–249 (VIGGDECNIN…YTDWIQSIIA (225 aa)). Disulfide bonds link cysteine 31–cysteine 163, cysteine 50–cysteine 66, cysteine 98–cysteine 256, cysteine 142–cysteine 210, cysteine 174–cysteine 189, and cysteine 200–cysteine 225. Residue asparagine 44 is glycosylated (N-linked (GlcNAc...) asparagine). The active-site Charge relay system is histidine 65. Residue asparagine 103 is glycosylated (N-linked (GlcNAc...) asparagine). The Charge relay system role is filled by aspartate 110. N-linked (GlcNAc...) asparagine glycosylation is found at asparagine 117, asparagine 121, and asparagine 154. The active-site Charge relay system is the serine 204. Asparagine 251 carries N-linked (GlcNAc...) asparagine glycosylation.

It belongs to the peptidase S1 family. Snake venom subfamily. As to quaternary structure, monomer. Expressed by the venom gland.

It is found in the secreted. In terms of biological role, snake venom serine protease that may act in the hemostasis system of the prey. The chain is Snake venom serine protease 3 (TLG3) from Craspedocephalus gramineus (Bamboo pit viper).